A 207-amino-acid chain; its full sequence is uncharacterized protein (207 aa).

5 helical membrane-spanning segments follow: residues 28 to 48 (IAVL…IVFV), 59 to 79 (EGFI…FLIV), 112 to 132 (MFLL…VAGL), 140 to 160 (FILA…FIGY), and 165 to 185 (LITQ…LWYV).

It is found in the cell membrane. This is an uncharacterized protein from Bacillus subtilis (strain 168).